The primary structure comprises 315 residues: Methionyl-tRNA formyltransferase (315 aa).

(6S)-5,6,7,8-tetrahydrofolate is bound at residue 113–116; sequence SLLP.

Belongs to the Fmt family.

The catalysed reaction is L-methionyl-tRNA(fMet) + (6R)-10-formyltetrahydrofolate = N-formyl-L-methionyl-tRNA(fMet) + (6S)-5,6,7,8-tetrahydrofolate + H(+). Functionally, attaches a formyl group to the free amino group of methionyl-tRNA(fMet). The formyl group appears to play a dual role in the initiator identity of N-formylmethionyl-tRNA by promoting its recognition by IF2 and preventing the misappropriation of this tRNA by the elongation apparatus. The polypeptide is Methionyl-tRNA formyltransferase (Escherichia coli O127:H6 (strain E2348/69 / EPEC)).